The primary structure comprises 42 residues: Photosystem I reaction center subunit IX (42 aa).

The helical transmembrane segment at 7–27 (YLSTAPVLAALSLGFLAGLLI) threads the bilayer.

This sequence belongs to the PsaJ family.

The protein resides in the plastid. It is found in the chloroplast thylakoid membrane. Functionally, may help in the organization of the PsaE and PsaF subunits. This Cryptomeria japonica (Japanese cedar) protein is Photosystem I reaction center subunit IX.